A 64-amino-acid chain; its full sequence is MKFTIVFLLLACVFAMAVATPGKPRPYSPRPTSHPRPIRVRREALAIEDHLAQAAIRPPPILPA.

An N-terminal signal peptide occupies residues 1-19; it reads MKFTIVFLLLACVFAMAVA. A propeptide spanning residues 20 to 21 is cleaved from the precursor; that stretch reads TP. Residue serine 28 is glycosylated (O-linked (GalNAc...) serine). Threonine 32 carries O-linked (GalNAc...) threonine glycosylation. A critical for inhibition of translation, possibly due to its role in mediating interactions with bacterial 23S rRNA and peptide chain release factors region spans residues 32-40; it reads TSHPRPIRV.

The protein belongs to the drosocin family. As to quaternary structure, associates with the bacterial 50S ribosomal complex, occupying the nascent peptide exit tunnel. Interacts with bacterial 23S rRNA; this interaction is direct. Interacts with bacterial rplV/50S ribosomal protein L22; this interaction is direct. Interacts with bacterial prfA/peptide chain release factor RF1; while associated with the bacterial 50S ribosomal complex, this interaction is direct and traps RF1 on the ribosome, inhibiting further translation. In terms of processing, proteolytically cleaved at a pair of basic residues corresponding to the RXK/RR optimal cleavage site for furin proteases to produce two distinct antibacterial peptides. Post-translationally, O-glycosylated. O-glycosylation may be required for efficient uptake by target bacterial cells. Monosaccharide modification of Thr-32 provides better antibacterial activity than disaccharide modification or no modification. O-glycosylation of Thr-32 is not essential for antimicrobial activity but enhances this activity by mediating interactions with the 23S rRNA and increasing the efficiency of translation inhibition.

It localises to the secreted. Its function is as follows. Antibacterial peptide with strong anti-Gram-negative bacteria activity. Significantly contributes to antibacterial activity against Enterobacter cloacae but not Providencia burhodogranariea. Inhibitor of bacterial translation machinery that targets translation termination in a prfA- or prfB-dependent manner. Binds within the nascent peptide exit tunnel of the bacterial large ribosomal subunit, potentially interfering with nascent chain translocation that occurs post-peptide bond formation. Binds prfA/RF1 (and potentially prfB/RF2), trapping it on the ribosome after release of the nascent polypeptide chain and preventing further translation. The resulting depletion of peptide chain release factors further disrupts bacterial translation by preventing ribosomal peptide chain release and inducing stop codon readthrough. Entry into target Escherichia coli cells requires the bacterial peptide antibiotic transporter sbmA. Functionally, peptide with significant antibacterial activity against Providencia burhodogranariea but not Enterobacter cloacae. The sequence is that of Drosocin antimicrobial peptides (Dro) from Drosophila simulans (Fruit fly).